Here is a 314-residue protein sequence, read N- to C-terminus: Glycerol-3-phosphate dehydrogenase [NAD(P)+] (314 aa).

NADPH is bound by residues serine 14, phenylalanine 15, arginine 35, and lysine 108. Positions 108 and 136 each coordinate sn-glycerol 3-phosphate. Alanine 140 lines the NADPH pocket. Lysine 191, aspartate 247, serine 257, arginine 258, and asparagine 259 together coordinate sn-glycerol 3-phosphate. The active-site Proton acceptor is the lysine 191. Residue arginine 258 coordinates NADPH. NADPH contacts are provided by leucine 282 and glutamate 284.

The protein belongs to the NAD-dependent glycerol-3-phosphate dehydrogenase family.

It is found in the cytoplasm. It carries out the reaction sn-glycerol 3-phosphate + NAD(+) = dihydroxyacetone phosphate + NADH + H(+). The catalysed reaction is sn-glycerol 3-phosphate + NADP(+) = dihydroxyacetone phosphate + NADPH + H(+). The protein operates within membrane lipid metabolism; glycerophospholipid metabolism. Its function is as follows. Catalyzes the reduction of the glycolytic intermediate dihydroxyacetone phosphate (DHAP) to sn-glycerol 3-phosphate (G3P), the key precursor for phospholipid synthesis. This Rickettsia bellii (strain OSU 85-389) protein is Glycerol-3-phosphate dehydrogenase [NAD(P)+].